A 380-amino-acid chain; its full sequence is 1-deoxy-D-xylulose 5-phosphate reductoisomerase (380 aa).

Thr-10, Gly-11, Ser-12, Ile-13, Gly-35, and Asn-121 together coordinate NADPH. Residue Lys-122 coordinates 1-deoxy-D-xylulose 5-phosphate. Glu-123 is an NADPH binding site. Asp-147 contributes to the Mn(2+) binding site. 4 residues coordinate 1-deoxy-D-xylulose 5-phosphate: Ser-148, Glu-149, Ser-173, and His-196. Glu-149 is a Mn(2+) binding site. Residue Gly-202 coordinates NADPH. Ser-209, Asn-214, Lys-215, and Glu-218 together coordinate 1-deoxy-D-xylulose 5-phosphate. Residue Glu-218 participates in Mn(2+) binding.

This sequence belongs to the DXR family. Mg(2+) is required as a cofactor. Requires Mn(2+) as cofactor.

It carries out the reaction 2-C-methyl-D-erythritol 4-phosphate + NADP(+) = 1-deoxy-D-xylulose 5-phosphate + NADPH + H(+). It functions in the pathway isoprenoid biosynthesis; isopentenyl diphosphate biosynthesis via DXP pathway; isopentenyl diphosphate from 1-deoxy-D-xylulose 5-phosphate: step 1/6. Catalyzes the NADPH-dependent rearrangement and reduction of 1-deoxy-D-xylulose-5-phosphate (DXP) to 2-C-methyl-D-erythritol 4-phosphate (MEP). This Lachnospira eligens (strain ATCC 27750 / DSM 3376 / VPI C15-48 / C15-B4) (Eubacterium eligens) protein is 1-deoxy-D-xylulose 5-phosphate reductoisomerase.